The chain runs to 395 residues: Phosphoprotein (395 aa).

3 disordered regions span residues 34 to 104 (VGRS…ADEA), 126 to 179 (NKSS…GTDA), and 192 to 214 (LSAGATHHALRSGQSQDNTPAPV). Positions 65 to 74 (TPDRQDRSDK) are enriched in basic and acidic residues. Composition is skewed to polar residues over residues 89 to 98 (PATSTDQPPT) and 147 to 178 (PTQQQGSQPSRGNSQERPQNQVKAAPGSQGTD). The multimerization stretch occupies residues 222-285 (DFVQAMMSMM…LGMMKILDPG (64 aa)).

Belongs to the rubulavirus/avulavirus P protein family. In terms of assembly, homotetramer. Interacts (via multimerization domain) with polymerase L; this interaction forms the polymerase L-P complex. Interacts (via N-terminus) with N0 (via Ncore); this interaction allows P to chaperon N0 to avoid N polymerization before encapsidation. Interacts (via C-terminus) with N-RNA template; this interaction positions the polymerase on the template for both transcription and replication.

In terms of biological role, essential cofactor of the RNA polymerase L that plays a central role in the transcription and replication by forming the polymerase complex with RNA polymerase L and recruiting L to the genomic N-RNA template for RNA synthesis. Also plays a central role in the encapsidation of nascent RNA chains by forming the encapsidation complex with the nucleocapsid protein N (N-P complex). Acts as a chaperone for newly synthesized free N protein, so-called N0, allowing encapsidation of nascent RNA chains during replication. The nucleoprotein protein N prevents excessive phosphorylation of P, which leads to down-regulation of viral transcription/ replication. Participates, together with N, in the formation of viral factories (viroplasms), which are large inclusions in the host cytoplasm where replication takes place. The sequence is that of Phosphoprotein (P/V) from Newcastle disease virus (strain Ulster/2C) (NDV).